Reading from the N-terminus, the 473-residue chain is Uronate isomerase (473 aa).

This sequence belongs to the metallo-dependent hydrolases superfamily. Uronate isomerase family.

The enzyme catalyses D-glucuronate = D-fructuronate. It catalyses the reaction aldehydo-D-galacturonate = keto-D-tagaturonate. The protein operates within carbohydrate metabolism; pentose and glucuronate interconversion. The chain is Uronate isomerase from Bacillus licheniformis (strain ATCC 14580 / DSM 13 / JCM 2505 / CCUG 7422 / NBRC 12200 / NCIMB 9375 / NCTC 10341 / NRRL NRS-1264 / Gibson 46).